The chain runs to 178 residues: Large ribosomal subunit protein uL6 (178 aa).

Belongs to the universal ribosomal protein uL6 family. In terms of assembly, part of the 50S ribosomal subunit.

Functionally, this protein binds to the 23S rRNA, and is important in its secondary structure. It is located near the subunit interface in the base of the L7/L12 stalk, and near the tRNA binding site of the peptidyltransferase center. In Halobacterium salinarum (strain ATCC 700922 / JCM 11081 / NRC-1) (Halobacterium halobium), this protein is Large ribosomal subunit protein uL6.